Consider the following 352-residue polypeptide: Probable transcription factor At1g11510 (352 aa).

2 disordered regions span residues 1–132 (MSRR…GGEE) and 239–269 (MKSN…KNNC). Acidic residues predominate over residues 56-66 (SGSDEETDSDS). Basic and acidic residues-rich tracts occupy residues 89-101 (KTSE…RSLE), 117-132 (VSGE…GGEE), and 241-259 (SNEK…HELD).

The protein belongs to the GeBP family.

In Arabidopsis thaliana (Mouse-ear cress), this protein is Probable transcription factor At1g11510.